The following is a 701-amino-acid chain: Capsid protein VP1 (701 aa).

This sequence belongs to the caliciviridae capsid protein family. In terms of assembly, homodimer. Homomultimer. Interacts with the minor capsid protein VP2. May bind to VP3 and Vpg proteins. Cleaved by the viral protease to produce mature capsid protein.

The protein localises to the virion. The protein resides in the host cytoplasm. Functionally, capsid protein self assembles to form an icosahedral capsid with a T=3 symmetry, about 38 nm in diameter, and consisting of 180 capsid proteins. A smaller form of capsid with a diameter of 23 nm might be capsid proteins assembled as icosahedron with T=1 symmetry. The capsid encapsulates the genomic RNA and is decorated with VP2 proteins. This Vesicular exanthema of swine virus serotype A48 (isolate Swine/United States/A48/1948) (VESV) protein is Capsid protein VP1.